Reading from the N-terminus, the 316-residue chain is Apolipoprotein E (316 aa).

Residues 1–18 (MKVLWVALVVALLAGCQA) form the signal peptide. Repeat copies occupy residues 79 to 100 (VLME…GQLA), 101 to 122 (PMAQ…ARLG), 123 to 144 (SDME…AMLG), 145 to 166 (QSTE…KRLL), 167 to 188 (RDAD…EGAE), 189 to 210 (RSVS…SRAA), 211 to 232 (TLST…QKLH), and 233 to 254 (GRLE…QQLE). The segment at 79 to 254 (VLMEETMKEV…RLDKMRQQLE (176 aa)) is 8 X 22 AA approximate tandem repeats. M142 carries the post-translational modification Methionine sulfoxide. S146 is modified (phosphoserine). Positions 157–167 (HLRKLRKRLLR) are LDL and other lipoprotein receptors binding. Residue 161–164 (LRKR) coordinates heparin. The lipid-binding and lipoprotein association stretch occupies residues 209–289 (AATLSTQVGQ…SWFEPLVEDM (81 aa)). Residue T211 is glycosylated (O-linked (GalNAc...) threonine). A heparin-binding site is contributed by 228 to 235 (RQKLHGRL). The interval 265–316 (SQIRLQAEAFQARLRSWFEPLVEDMQRQWAGLVEKVQLALHLSPTSPPSENH) is homooligomerization. The interval 277-289 (RLRSWFEPLVEDM) is specificity for association with VLDL.

It belongs to the apolipoprotein A1/A4/E family. In terms of assembly, homotetramer. May interact with ABCA1; functionally associated with ABCA1 in the biogenesis of HDLs. May interact with APP/A4 amyloid-beta peptide; the interaction is extremely stable in vitro but its physiological significance is unclear. May interact with MAPT. May interact with MAP2. In the cerebrospinal fluid, interacts with secreted SORL1. Interacts with PMEL; this allows the loading of PMEL luminal fragment on ILVs to induce fibril nucleation. APOE exists as multiple glycosylated and sialylated glycoforms within cells and in plasma. The extent of glycosylation and sialylation are tissue and context specific. Post-translationally, glycated in plasma VLDL. In terms of processing, phosphorylated by FAM20C in the extracellular medium.

Its subcellular location is the secreted. It localises to the extracellular space. The protein resides in the extracellular matrix. It is found in the extracellular vesicle. The protein localises to the endosome. Its subcellular location is the multivesicular body. In terms of biological role, APOE is an apolipoprotein, a protein associating with lipid particles, that mainly functions in lipoprotein-mediated lipid transport between organs via the plasma and interstitial fluids. APOE is a core component of plasma lipoproteins and is involved in their production, conversion and clearance. Apolipoproteins are amphipathic molecules that interact both with lipids of the lipoprotein particle core and the aqueous environment of the plasma. As such, APOE associates with chylomicrons, chylomicron remnants, very low density lipoproteins (VLDL) and intermediate density lipoproteins (IDL) but shows a preferential binding to high-density lipoproteins (HDL). It also binds a wide range of cellular receptors including the LDL receptor/LDLR and the very low-density lipoprotein receptor/VLDLR that mediate the cellular uptake of the APOE-containing lipoprotein particles. Finally, APOE also has a heparin-binding activity and binds heparan-sulfate proteoglycans on the surface of cells, a property that supports the capture and the receptor-mediated uptake of APOE-containing lipoproteins by cells. This chain is Apolipoprotein E (APOE), found in Ovis aries musimon (Mouflon).